The chain runs to 228 residues: Urease accessory protein UreF (228 aa).

Belongs to the UreF family. As to quaternary structure, ureD, UreF and UreG form a complex that acts as a GTP-hydrolysis-dependent molecular chaperone, activating the urease apoprotein by helping to assemble the nickel containing metallocenter of UreC. The UreE protein probably delivers the nickel.

It localises to the cytoplasm. Required for maturation of urease via the functional incorporation of the urease nickel metallocenter. The protein is Urease accessory protein UreF of Prochlorococcus marinus (strain AS9601).